We begin with the raw amino-acid sequence, 491 residues long: Ribosome biogenesis protein YTM1 (491 aa).

The tract at residues 8 to 103 is ubiquitin-like (UBL) domain; sequence IKIKFTTNES…EAFLTIEYTR (96 aa). The sufficient for interaction with ERB1 and association with 66S pre-ribosomes stretch occupies residues 113 to 491; it reads SFQNDDWISS…QINKGSDISK (379 aa). WD repeat units follow at residues 128–167, 169–207, 241–280, 318–358, 360–399, 409–449, and 456–491; these read RNLS…EKQY, GHSA…VVDQ, GHKA…MAKI, GHTE…CVDT, TTGF…SNTN, GHTN…SLYT, and STKS…DISK. The disordered stretch occupies residues 205 to 228; that stretch reads VDQNEEDEEENEANEGDDGDNDME. A compositionally biased stretch (acidic residues) spans 207-225; that stretch reads QNEEDEEENEANEGDDGDN.

It belongs to the WD repeat WDR12/YTM1 family. As to quaternary structure, component of the NOP7 complex, composed of ERB1, NOP7 and YTM1. The complex is held together by ERB1, which interacts with NOP7 via its N-terminal domain and with YTM1 via a high-affinity interaction between the seven-bladed beta-propeller domains of the 2 proteins. The NOP7 complex associates with the 66S pre-ribosome. Interacts (via UBL domain) with MDN1 (via VWFA/MIDAS domain).

It is found in the nucleus. The protein localises to the nucleolus. It localises to the nucleoplasm. Component of the NOP7 complex, which is required for maturation of the 25S and 5.8S ribosomal RNAs and formation of the 60S ribosome. This Lodderomyces elongisporus (strain ATCC 11503 / CBS 2605 / JCM 1781 / NBRC 1676 / NRRL YB-4239) (Yeast) protein is Ribosome biogenesis protein YTM1.